Here is a 286-residue protein sequence, read N- to C-terminus: ATP phosphoribosyltransferase (286 aa).

It belongs to the ATP phosphoribosyltransferase family. Long subfamily. Mg(2+) serves as cofactor.

It localises to the cytoplasm. It carries out the reaction 1-(5-phospho-beta-D-ribosyl)-ATP + diphosphate = 5-phospho-alpha-D-ribose 1-diphosphate + ATP. The protein operates within amino-acid biosynthesis; L-histidine biosynthesis; L-histidine from 5-phospho-alpha-D-ribose 1-diphosphate: step 1/9. Feedback inhibited by histidine. In terms of biological role, catalyzes the condensation of ATP and 5-phosphoribose 1-diphosphate to form N'-(5'-phosphoribosyl)-ATP (PR-ATP). Has a crucial role in the pathway because the rate of histidine biosynthesis seems to be controlled primarily by regulation of HisG enzymatic activity. This is ATP phosphoribosyltransferase from Cytophaga hutchinsonii (strain ATCC 33406 / DSM 1761 / CIP 103989 / NBRC 15051 / NCIMB 9469 / D465).